Here is a 103-residue protein sequence, read N- to C-terminus: Nucleoid-associated protein NIS_0256 (103 aa).

It belongs to the YbaB/EbfC family. In terms of assembly, homodimer.

The protein localises to the cytoplasm. The protein resides in the nucleoid. Binds to DNA and alters its conformation. May be involved in regulation of gene expression, nucleoid organization and DNA protection. The sequence is that of Nucleoid-associated protein NIS_0256 from Nitratiruptor sp. (strain SB155-2).